We begin with the raw amino-acid sequence, 1042 residues long: MFKKVENKANFPKIEEKILKFWNDNKIFEKSIKQREGCEEFTFYDGPPFATGLPHFGHFVPNTIKDIIPRYQTMQGKYVKRNFGWDTHGLPVEYEVEKKLGISGKYEIENYGIENFNKECRKIVLRYTEEWKNIILRLGRWVDFEKGYKTMDISFMESVWWVFKNLYEKGLIYESYYVLPYSPKLATPLSNFEVNLGEYKEVNDPSLTIKFKIKDKNEYLLVWTTTPWTLPSNLGIAVGQEIEYSKIFDKTKEEILILGSKKLNSYYDDENSYTIIEKFKGSKLEGIEYEPIFNYFLEQKDKGAFKVHTADYVTTDDGTGIVHIAPFGEEDYKILKKHTNVDIIDPLDAECKFTNQVKDFKGLFVKDADKKIIENLKLRNFLFKRENYLHRYPFCYRTNCPIIYRPISSWFVNVEKIKTKLLEVNEKINWMPAHLKKGRFGKWLENAKDWAISRNRFWGNPIPIWICSKTGKKICIGSKKELENLSGQKIEDLHKDQIDKITWPSKDGGKFIRTSEVLDCWFESGAMPYASNHYPFTNEINFKNIFPADFIAEGLDQTRGWFYTLTILGTALFENTAFKNVIVNGLVLSSDGRKMSKSFKNYTDPMQVINTFGADALRLYLIMSPVVKADDLKYSDNGVRDVLKNIIIPIWNAYSFFTTYAIIDKFKPPKNISLAKNNNLDKWIISELESLKKILNTEIDKYNLTKSIESLLEFIDKLNNWYIRRSRRRFWKSENDKDKNDAYETLYYAIKTLMILLAPFIPFITEEIYQNLKTDEDKQSIHLNDYPKANENFINKTIEEKINLARKITSMARSLRSLHNIKIRMPISTIYIVTKNQNEQNMLMEMQEIILDEINAKEMKIKANEEELITYKAKANFKELGKKLGKDMKAVSAEISKLKNEDIIKIINGTSYEIKVANAKHYLSLNDIILEREEKENLKVINEESITIGIDSLITKELYLEGLTREFVRQIQNLRKEKNFDVSDRINLYIENSETLKEMLNKFEKYIKTETLALNIILNKSKLEKKINLADDIFTLIGIEKC.

Positions 48–58 (PFATGLPHFGH) match the 'HIGH' region motif. Residues 594–598 (KMSKS) carry the 'KMSKS' region motif. Lys597 contacts ATP.

The protein belongs to the class-I aminoacyl-tRNA synthetase family. IleS type 2 subfamily. Monomer. Requires Zn(2+) as cofactor.

The protein resides in the cytoplasm. The enzyme catalyses tRNA(Ile) + L-isoleucine + ATP = L-isoleucyl-tRNA(Ile) + AMP + diphosphate. Functionally, catalyzes the attachment of isoleucine to tRNA(Ile). As IleRS can inadvertently accommodate and process structurally similar amino acids such as valine, to avoid such errors it has two additional distinct tRNA(Ile)-dependent editing activities. One activity is designated as 'pretransfer' editing and involves the hydrolysis of activated Val-AMP. The other activity is designated 'posttransfer' editing and involves deacylation of mischarged Val-tRNA(Ile). The polypeptide is Isoleucine--tRNA ligase (Borreliella burgdorferi (strain ZS7) (Borrelia burgdorferi)).